A 95-amino-acid chain; its full sequence is Glutamyl-tRNA(Gln) amidotransferase subunit C (95 aa).

Belongs to the GatC family. Heterotrimer of A, B and C subunits.

It catalyses the reaction L-glutamyl-tRNA(Gln) + L-glutamine + ATP + H2O = L-glutaminyl-tRNA(Gln) + L-glutamate + ADP + phosphate + H(+). The catalysed reaction is L-aspartyl-tRNA(Asn) + L-glutamine + ATP + H2O = L-asparaginyl-tRNA(Asn) + L-glutamate + ADP + phosphate + 2 H(+). Its function is as follows. Allows the formation of correctly charged Asn-tRNA(Asn) or Gln-tRNA(Gln) through the transamidation of misacylated Asp-tRNA(Asn) or Glu-tRNA(Gln) in organisms which lack either or both of asparaginyl-tRNA or glutaminyl-tRNA synthetases. The reaction takes place in the presence of glutamine and ATP through an activated phospho-Asp-tRNA(Asn) or phospho-Glu-tRNA(Gln). The sequence is that of Glutamyl-tRNA(Gln) amidotransferase subunit C from Mesorhizobium japonicum (strain LMG 29417 / CECT 9101 / MAFF 303099) (Mesorhizobium loti (strain MAFF 303099)).